We begin with the raw amino-acid sequence, 145 residues long: D-aminoacyl-tRNA deacylase (145 aa).

The Gly-cisPro motif, important for rejection of L-amino acids motif lies at 137–138 (GP).

It belongs to the DTD family. As to quaternary structure, homodimer.

It localises to the cytoplasm. The catalysed reaction is glycyl-tRNA(Ala) + H2O = tRNA(Ala) + glycine + H(+). It catalyses the reaction a D-aminoacyl-tRNA + H2O = a tRNA + a D-alpha-amino acid + H(+). Its function is as follows. An aminoacyl-tRNA editing enzyme that deacylates mischarged D-aminoacyl-tRNAs. Also deacylates mischarged glycyl-tRNA(Ala), protecting cells against glycine mischarging by AlaRS. Acts via tRNA-based rather than protein-based catalysis; rejects L-amino acids rather than detecting D-amino acids in the active site. By recycling D-aminoacyl-tRNA to D-amino acids and free tRNA molecules, this enzyme counteracts the toxicity associated with the formation of D-aminoacyl-tRNA entities in vivo and helps enforce protein L-homochirality. This Shewanella baltica (strain OS223) protein is D-aminoacyl-tRNA deacylase.